Reading from the N-terminus, the 321-residue chain is Fructose-1,6-bisphosphatase class 1 (321 aa).

Residues Glu93, Asp114, Leu116, and Asp117 each contribute to the Mg(2+) site. Substrate is bound by residues 117–120 (DGSS), Asn205, Tyr233, and Lys263. Position 269 (Glu269) interacts with Mg(2+).

This sequence belongs to the FBPase class 1 family. As to quaternary structure, homotetramer. Mg(2+) serves as cofactor.

It localises to the cytoplasm. The enzyme catalyses beta-D-fructose 1,6-bisphosphate + H2O = beta-D-fructose 6-phosphate + phosphate. The protein operates within carbohydrate biosynthesis; gluconeogenesis. The polypeptide is Fructose-1,6-bisphosphatase class 1 (Persephonella marina (strain DSM 14350 / EX-H1)).